We begin with the raw amino-acid sequence, 299 residues long: MSKTLSVDKSQLRSPWSTYWTLTKPKVVALMLLTSVVGMSLAPHEHFTWHQALIALVGIALMAGSAAAFNHLIDRRIDAKMARTYRRPLPKGDVSPFNVLLFALLIGSLGFLSLMLWVNSLTAYLTFASLLGYAVVYTLYLKRATPQNIVIAGIAGAMPPLLGWTSITGELHPHAWLLVMIIFIWTPPHFWALAIHRKEDYAKVNIPMLPVTHGVEYTKTSILLYAILLALVCMLPVLVGMASYLYLFSALVLNVCFVRYAIKLKFRAEERTAIEMFRFSIYFLLLLFCALLLDQQLAL.

Helical transmembrane passes span 27–47 (VVAL…HEHF), 53–73 (LIAL…NHLI), 97–117 (FNVL…LMLW), 121–141 (LTAY…TLYL), 149–169 (IVIA…SITG), 175–195 (AWLL…ALAI), 222–242 (ILLY…VGMA), 244–264 (YLYL…AIKL), and 273–293 (AIEM…ALLL).

It belongs to the UbiA prenyltransferase family. Protoheme IX farnesyltransferase subfamily.

It localises to the cell inner membrane. The enzyme catalyses heme b + (2E,6E)-farnesyl diphosphate + H2O = Fe(II)-heme o + diphosphate. It participates in porphyrin-containing compound metabolism; heme O biosynthesis; heme O from protoheme: step 1/1. Functionally, converts heme B (protoheme IX) to heme O by substitution of the vinyl group on carbon 2 of heme B porphyrin ring with a hydroxyethyl farnesyl side group. The sequence is that of Protoheme IX farnesyltransferase from Vibrio vulnificus (strain YJ016).